Here is a 387-residue protein sequence, read N- to C-terminus: ERBB-3 BINDING PROTEIN 1 (387 aa).

Necessary for nucleolar localization stretches follow at residues 1–49 and 297–387; these read MSDD…IVDL and LLQP…PMEG. An RNA-binding region spans residues 47–55; that stretch reads VDLCEKGDA. The tract at residues 337 to 387 is disordered; that stretch reads LQPTKTTENEPEIKAWLALPTKTKKKGGGKKKKGKKGDKVEEASQAEPMEG. The interaction with RNA stretch occupies residues 356-373; the sequence is PTKTKKKGGGKKKKGKKG. Residues 358–372 are compositionally biased toward basic residues; that stretch reads KTKKKGGGKKKKGKK. A Nuclear localization signal motif is present at residues 360-369; the sequence is KKKGGGKKKK.

Belongs to the peptidase M24 family. Component of a ribonucleoprotein complex. As to expression, expressed during tuberisation and in roots, nodes, internodes, petioles, leaves, stolons, tubers and sprouts.

The protein resides in the nucleus. Functionally, binds RNA. Associates with 28S, 18S and 5.8S mature rRNAs, several rRNA precursors and probably U3 small nucleolar RNA. May be involved in regulation of intermediate and late steps of rRNA processing. May be involved in ribosome assembly. Required for expression of cell cycle genes such as CYCD3-1, RNR2A and CDKB1-1. Promotes, in a dose- and auxin-dependent manner, organ growth by stimulating both cell proliferation and expansion, via the regulation of RBR1 levels. The polypeptide is ERBB-3 BINDING PROTEIN 1 (Solanum tuberosum (Potato)).